The following is a 115-amino-acid chain: Large ribosomal subunit protein P2y (115 aa).

The interval 63 to 115 (ASVPSGGGGGVAVASATSGGGGGGGASAAESKKEEKKEEKEESDDDMGFSLFE) is disordered. Positions 92-102 (ESKKEEKKEEK) are enriched in basic and acidic residues. Ser-105 is subject to Phosphoserine.

The protein belongs to the eukaryotic ribosomal protein P1/P2 family. As to quaternary structure, P1 and P2 exist as dimers at the large ribosomal subunit. In terms of processing, phosphorylated.

In terms of biological role, plays an important role in the elongation step of protein synthesis. This chain is Large ribosomal subunit protein P2y (RPP2B), found in Arabidopsis thaliana (Mouse-ear cress).